Here is a 60-residue protein sequence, read N- to C-terminus: Large ribosomal subunit protein uL30 (60 aa).

The protein belongs to the universal ribosomal protein uL30 family. In terms of assembly, part of the 50S ribosomal subunit.

This is Large ribosomal subunit protein uL30 from Streptococcus gordonii (strain Challis / ATCC 35105 / BCRC 15272 / CH1 / DL1 / V288).